The primary structure comprises 88 residues: FXYD domain-containing ion transport regulator 3 (88 aa).

A signal peptide (not cleaved) is located at residues Met1–Ala20. Over Met1 to Arg38 the chain is Extracellular. The helical transmembrane segment at Val39 to Gly59 threads the bilayer. The Cytoplasmic portion of the chain corresponds to Lys60 to Cys88. The segment at Gln67 to Cys88 is disordered.

This sequence belongs to the FXYD family. In terms of assembly, regulatory subunit of the sodium/potassium-transporting ATPase which is composed of a catalytic alpha subunit, a non-catalytic beta subunit and an additional regulatory subunit. Interacts with catalytic alpha subunit ATP1A1. Also interacts with non-catalytic beta subunit ATP1B1. Interacts with the ATP1A1-ATP1B1, ATP1A2-ATP1B1 and ATP1A3-ATP1B1 NKA isozymes. Glutathionylated. As to expression, expressed at high levels in heart, skeletal muscle and liver with low levels of expression in breast, brain, lung, stomach and colon. In the gastric gland, mainly expressed in the mucus cells forming the upper part of the gland and is absent from the parietal cells.

The protein localises to the cell membrane. Its function is as follows. Associates with and regulates the activity of the sodium/potassium-transporting ATPase (NKA) which transports Na(+) out of the cell and K(+) into the cell. Reduces glutathionylation of the NKA beta-1 subunit ATP1B1, thus reversing glutathionylation-mediated inhibition of ATP1B1. Induces a hyperpolarization-activated chloride current when expressed in Xenopus oocytes. The polypeptide is FXYD domain-containing ion transport regulator 3 (Fxyd3) (Mus musculus (Mouse)).